The following is a 338-amino-acid chain: MEMTHYEKTPLIRQVFNNGKTNSWFYVKHEILQPGGSFKSRGIGHLIRKSNEEALSEGSGKLAVFSSSGGNAGLAAATACRSMALNCSVVVPKTTKPRMVKKIQSAGAKVIIHGDHWGEADEYLRHKLMAQESQHGSKTLYVHPFDNETIWEGHSTIVDEIIEQLKENDISLPRVKALVCSVGGGGLFSGIIKGLDRNHLAEKIPVVAVETAGCDVLNKSLKKGSPVTLEKLTSVATSLASPYIASFAFESFNKYGCKSVVLSDQDVLATCLRYADDYNFIVEPACGASLHLCYHPEILEDILEQKIYEDDIVIIIACGGSCMTYEDLVKASSTLNVS.

N6-(pyridoxal phosphate)lysine is present on Lys39.

It belongs to the serine/threonine dehydratase family. Pyridoxal 5'-phosphate is required as a cofactor.

It is found in the cytoplasm. It carries out the reaction L-serine = pyruvate + NH4(+). It functions in the pathway carbohydrate biosynthesis; gluconeogenesis. In Saccharomyces cerevisiae (strain RM11-1a) (Baker's yeast), this protein is L-serine dehydratase (SDL1).